The chain runs to 215 residues: Large ribosomal subunit protein bL25 (215 aa).

Residues 170–215 are disordered; sequence DPDTSVASVTPPTTEEDLDTDDVDENAEPELVGAENDSADEESENK. 2 stretches are compositionally biased toward acidic residues: residues 183-197 and 206-215; these read TEEDLDTDDVDENAE and DSADEESENK.

Belongs to the bacterial ribosomal protein bL25 family. CTC subfamily. In terms of assembly, part of the 50S ribosomal subunit; part of the 5S rRNA/L5/L18/L25 subcomplex. Contacts the 5S rRNA. Binds to the 5S rRNA independently of L5 and L18.

Functionally, this is one of the proteins that binds to the 5S RNA in the ribosome where it forms part of the central protuberance. This Oceanobacillus iheyensis (strain DSM 14371 / CIP 107618 / JCM 11309 / KCTC 3954 / HTE831) protein is Large ribosomal subunit protein bL25.